A 300-amino-acid polypeptide reads, in one-letter code: Ornithine carbamoyltransferase (300 aa).

Residues 49 to 52, Gln-76, Arg-100, and 127 to 130 contribute to the carbamoyl phosphate site; these read STRT and HPCQ. L-ornithine-binding positions include Asn-158, Asp-218, and 222–223; that span reads SM. Residues 258–259 and Arg-286 contribute to the carbamoyl phosphate site; that span reads CL.

It belongs to the aspartate/ornithine carbamoyltransferase superfamily. OTCase family.

Its subcellular location is the cytoplasm. The catalysed reaction is carbamoyl phosphate + L-ornithine = L-citrulline + phosphate + H(+). Its pathway is amino-acid biosynthesis; L-arginine biosynthesis; L-arginine from L-ornithine and carbamoyl phosphate: step 1/3. Reversibly catalyzes the transfer of the carbamoyl group from carbamoyl phosphate (CP) to the N(epsilon) atom of ornithine (ORN) to produce L-citrulline. The polypeptide is Ornithine carbamoyltransferase (Nitratidesulfovibrio vulgaris (strain ATCC 29579 / DSM 644 / CCUG 34227 / NCIMB 8303 / VKM B-1760 / Hildenborough) (Desulfovibrio vulgaris)).